We begin with the raw amino-acid sequence, 241 residues long: Fatty acid metabolism regulator protein (241 aa).

In terms of domain architecture, HTH gntR-type spans 6 to 74 (KGPASFAEKY…HGKPTRVNNF (69 aa)). Residues 34–53 (ERELSELIGVTRTTLREVLQ) constitute a DNA-binding region (H-T-H motif).

Homodimer.

It is found in the cytoplasm. In terms of biological role, multifunctional regulator of fatty acid metabolism. This is Fatty acid metabolism regulator protein from Shewanella sp. (strain MR-4).